Here is a 262-residue protein sequence, read N- to C-terminus: Type III pantothenate kinase (262 aa).

9–16 provides a ligand contact to ATP; the sequence is DAGNSRIK. Residues Tyr-96 and 103 to 106 contribute to the substrate site; that span reads GSDR. Asp-105 (proton acceptor) is an active-site residue. Thr-129 provides a ligand contact to ATP. Thr-189 lines the substrate pocket.

It belongs to the type III pantothenate kinase family. Homodimer. NH4(+) is required as a cofactor. The cofactor is K(+).

The protein resides in the cytoplasm. The catalysed reaction is (R)-pantothenate + ATP = (R)-4'-phosphopantothenate + ADP + H(+). It functions in the pathway cofactor biosynthesis; coenzyme A biosynthesis; CoA from (R)-pantothenate: step 1/5. In terms of biological role, catalyzes the phosphorylation of pantothenate (Pan), the first step in CoA biosynthesis. The protein is Type III pantothenate kinase of Burkholderia vietnamiensis (strain G4 / LMG 22486) (Burkholderia cepacia (strain R1808)).